The sequence spans 431 residues: Na(+)-translocating NADH-quinone reductase subunit F (431 aa).

The helical transmembrane segment at 9-29 threads the bilayer; the sequence is FICIASLIFCAIGVILAGVIL. The region spanning 39–133 is the 2Fe-2S ferredoxin-type domain; it reads HPCKLKINDN…DMSLEIEERY (95 aa). [2Fe-2S] cluster contacts are provided by Cys-76, Cys-82, Cys-85, and Cys-117. One can recognise an FAD-binding FR-type domain in the interval 136–286; that stretch reads ASSWEGTVIS…SGPYGESFMK (151 aa). The catalytic stretch occupies residues 289-413; the sequence is DRPLIFLIGG…PLHNSSILKL (125 aa).

Belongs to the NqrF family. In terms of assembly, composed of six subunits; NqrA, NqrB, NqrC, NqrD, NqrE and NqrF. [2Fe-2S] cluster is required as a cofactor. Requires FAD as cofactor.

The protein resides in the cell inner membrane. It carries out the reaction a ubiquinone + n Na(+)(in) + NADH + H(+) = a ubiquinol + n Na(+)(out) + NAD(+). NQR complex catalyzes the reduction of ubiquinone-1 to ubiquinol by two successive reactions, coupled with the transport of Na(+) ions from the cytoplasm to the periplasm. The first step is catalyzed by NqrF, which accepts electrons from NADH and reduces ubiquinone-1 to ubisemiquinone by a one-electron transfer pathway. This chain is Na(+)-translocating NADH-quinone reductase subunit F, found in Chlamydia pneumoniae (Chlamydophila pneumoniae).